The primary structure comprises 310 residues: 4-hydroxythreonine-4-phosphate dehydrogenase (310 aa).

Thr-129 lines the substrate pocket. A divalent metal cation-binding residues include His-158, His-202, and His-250. 3 residues coordinate substrate: Lys-258, Asn-267, and Arg-276.

The protein belongs to the PdxA family. As to quaternary structure, homodimer. It depends on a divalent metal cation as a cofactor.

It is found in the cytoplasm. The enzyme catalyses 4-(phosphooxy)-L-threonine + NAD(+) = 3-amino-2-oxopropyl phosphate + CO2 + NADH. The protein operates within cofactor biosynthesis; pyridoxine 5'-phosphate biosynthesis; pyridoxine 5'-phosphate from D-erythrose 4-phosphate: step 4/5. Catalyzes the NAD(P)-dependent oxidation of 4-(phosphooxy)-L-threonine (HTP) into 2-amino-3-oxo-4-(phosphooxy)butyric acid which spontaneously decarboxylates to form 3-amino-2-oxopropyl phosphate (AHAP). This Hydrogenobaculum sp. (strain Y04AAS1) protein is 4-hydroxythreonine-4-phosphate dehydrogenase.